Reading from the N-terminus, the 370-residue chain is Histidinol-phosphate aminotransferase 3 (370 aa).

The residue at position 233 (K233) is an N6-(pyridoxal phosphate)lysine.

The protein belongs to the class-II pyridoxal-phosphate-dependent aminotransferase family. Histidinol-phosphate aminotransferase subfamily. As to quaternary structure, homodimer. Requires pyridoxal 5'-phosphate as cofactor.

It catalyses the reaction L-histidinol phosphate + 2-oxoglutarate = 3-(imidazol-4-yl)-2-oxopropyl phosphate + L-glutamate. It functions in the pathway amino-acid biosynthesis; L-histidine biosynthesis; L-histidine from 5-phospho-alpha-D-ribose 1-diphosphate: step 7/9. The polypeptide is Histidinol-phosphate aminotransferase 3 (Burkholderia lata (strain ATCC 17760 / DSM 23089 / LMG 22485 / NCIMB 9086 / R18194 / 383)).